The chain runs to 358 residues: Uroporphyrinogen decarboxylase (358 aa).

Substrate is bound by residues 27 to 31, aspartate 77, tyrosine 154, serine 209, and histidine 330; that span reads RQAGR.

Belongs to the uroporphyrinogen decarboxylase family. In terms of assembly, homodimer.

Its subcellular location is the cytoplasm. It catalyses the reaction uroporphyrinogen III + 4 H(+) = coproporphyrinogen III + 4 CO2. It functions in the pathway porphyrin-containing compound metabolism; protoporphyrin-IX biosynthesis; coproporphyrinogen-III from 5-aminolevulinate: step 4/4. Catalyzes the decarboxylation of four acetate groups of uroporphyrinogen-III to yield coproporphyrinogen-III. This Acinetobacter baylyi (strain ATCC 33305 / BD413 / ADP1) protein is Uroporphyrinogen decarboxylase.